Here is a 283-residue protein sequence, read N- to C-terminus: Large ribosomal subunit protein mL46 (283 aa).

K217 carries the post-translational modification N6-succinyllysine. At K228 the chain carries N6-acetyllysine. N6-succinyllysine is present on K246.

This sequence belongs to the mitochondrion-specific ribosomal protein mL46 family. In terms of assembly, component of the mitochondrial ribosome large subunit (39S) which comprises a 16S rRNA and about 50 distinct proteins.

Its subcellular location is the mitochondrion. The sequence is that of Large ribosomal subunit protein mL46 (Mrpl46) from Mus musculus (Mouse).